Reading from the N-terminus, the 149-residue chain is Tetracenomycin polyketide synthase protein TcmJ (149 aa).

In terms of domain architecture, Cupin type-2 spans 51 to 117 (HIELAPGESV…NRGNVPARVV (67 aa)). A disordered region spans residues 127–149 (PELGHVDTEPVPNPAAAPPKVGG).

As to quaternary structure, the tetracenomycin polyketide synthase (TCM PKS) is composed of a ketosynthase complex (TcmKL), an acyl carrier protein (TcmM), a cyclase (TcmN) and a probable second cyclase (TcmJ).

The enzyme catalyses 10 malonyl-CoA + 8 H(+) = tetracenomycin F2 + 10 CO2 + 10 CoA + 2 H2O. It functions in the pathway antibiotic biosynthesis; tetracenomycin C biosynthesis. Its function is as follows. Involved in the biosynthesis of tetracenomycin C (TCM C). Part of a type II polyketide synthase (PKS) that catalyzes the synthesis of tetracenomycin F2 (TCM F2), a precursor of TCM C, from malonyl-CoA. TcmJ, while not absolutely required, greatly increases the tetracenomycin F2 production. It probably acts as a cyclase. The protein is Tetracenomycin polyketide synthase protein TcmJ of Streptomyces glaucescens.